The primary structure comprises 517 residues: MSRSESPRPLLEMRGISKTFPAVRALDNVSLTVYPGEIHSLMGENGAGKSTLMKILSGAYRADAGGEILIDGQRIEIDGPLAARDAGVAVIYQELCLSPNLTVAENIYVGRELRRGNRRWGTIDRAAMARGCQDVLARLGAPFGPDTLVDTLSIAEQQLVEIARAVHTRARILVMDEPTTPLSSRETEHLFRLIRQLREEGLAIIYISHRMAEIYELSDRVSVLRDGAYVGTLERASLSAERLVAMMVGRDISGFYKKEHAPYDPGHLLLSVRDIADGTRVRGCSLDLHAGEVLGIAGLVGAGRTELARLIFGAEPRVRGDVKLGERTFGAHSPRDAIDAGLVYLTEDRKRQGLFLDMSVRDNINISVCNRDARLGALDLARGAERARDAIASLSIRVPHANVNVGALSGGNQQKVLLSRLLETKPRVLILDEPTRGVDIGAKSEIYRIINELARAGVGVIVISSELPEIIGVADRVLVMREGEIAGELGGHTHTPITQEAIIALATGSQAELADAH.

ABC transporter domains are found at residues 11–251 (LEMR…VGRD) and 263–507 (YDPG…ALAT). 43 to 50 (GENGAGKS) lines the ATP pocket.

The protein belongs to the ABC transporter superfamily. Ribose importer (TC 3.A.1.2.1) family. As to quaternary structure, the complex is composed of an ATP-binding protein (RbsA), two transmembrane proteins (RbsC) and a solute-binding protein (RbsB).

The protein resides in the cell inner membrane. It carries out the reaction D-ribose(out) + ATP + H2O = D-ribose(in) + ADP + phosphate + H(+). Its function is as follows. Part of the ABC transporter complex RbsABC involved in ribose import. Responsible for energy coupling to the transport system. The chain is Ribose import ATP-binding protein RbsA 1 from Burkholderia cenocepacia (strain HI2424).